Here is a 462-residue protein sequence, read N- to C-terminus: ATP synthase subunit beta (462 aa).

150 to 157 (GGAGVGKT) contributes to the ATP binding site.

It belongs to the ATPase alpha/beta chains family. F-type ATPases have 2 components, CF(1) - the catalytic core - and CF(0) - the membrane proton channel. CF(1) has five subunits: alpha(3), beta(3), gamma(1), delta(1), epsilon(1). CF(0) has three main subunits: a(1), b(2) and c(9-12). The alpha and beta chains form an alternating ring which encloses part of the gamma chain. CF(1) is attached to CF(0) by a central stalk formed by the gamma and epsilon chains, while a peripheral stalk is formed by the delta and b chains. In this bacterium the a and b subunits are transcribed but do not seem to be translated, thus the ATP synthase consists of the alpha, beta, gamma, delta, epsilon and c subunits.

The protein resides in the cell membrane. It carries out the reaction ATP + H2O + 4 H(+)(in) = ADP + phosphate + 5 H(+)(out). Produces ATP from ADP in the presence of a proton gradient across the membrane. The catalytic sites are hosted primarily by the beta subunits. This Moorella thermoacetica (strain ATCC 39073 / JCM 9320) protein is ATP synthase subunit beta.